The following is a 623-amino-acid chain: tRNA uridine 5-carboxymethylaminomethyl modification enzyme MnmG (623 aa).

10–15 (GGGHAG) contributes to the FAD binding site. Position 269 to 283 (269 to 283 (GPRYCPSIEDKIVRF)) interacts with NAD(+).

This sequence belongs to the MnmG family. In terms of assembly, homodimer. Heterotetramer of two MnmE and two MnmG subunits. Requires FAD as cofactor.

It is found in the cytoplasm. Its function is as follows. NAD-binding protein involved in the addition of a carboxymethylaminomethyl (cmnm) group at the wobble position (U34) of certain tRNAs, forming tRNA-cmnm(5)s(2)U34. The chain is tRNA uridine 5-carboxymethylaminomethyl modification enzyme MnmG from Rhizobium meliloti (strain 1021) (Ensifer meliloti).